Reading from the N-terminus, the 88-residue chain is UPF0297 protein SGO_2042 (88 aa).

The protein belongs to the UPF0297 family.

The sequence is that of UPF0297 protein SGO_2042 from Streptococcus gordonii (strain Challis / ATCC 35105 / BCRC 15272 / CH1 / DL1 / V288).